The primary structure comprises 70 residues: MKSLHDSLSVTDIKRSRLQISMQTLCPFLEDTLQCKSLLSLVVERCTCNAKVVSSILTGGKIFSLKLTLI.

This is an uncharacterized protein from Saccharomyces cerevisiae (strain ATCC 204508 / S288c) (Baker's yeast).